The following is an 837-amino-acid chain: MSLSHLYRDGEGRIDDDDDERENFEITDWDLQNEFNPNRQRHWQTKEEATYGVWAERDSDDERPSFGGKRARDYSAPVNFISAGLKKGAAEEAELEDSDDEEKPVKQDDFPKDFGPRKLKTGGNFKPSQKGFAGGTKSFMDFGSWERHTKGIGQKLLQKMGYVPGRGLGKNAQGIINPIEAKQRKGKGAVGAYGSERTTQSMQDFPVVDSEEEAEEEFQKELSQWRKDPSGSKKKPKYSYKTVEELKAKGRISKKLTAPQKELSQVKVIDMTGREQKVYYSYSQISHKHNVPDDGLPLQSQQLPQSGKEAKAPGFALPELEHNLQLLIDLTEQEIIQNDRQLQYERDMVVNLFHELEKMTEVLDHEERVISNLSKVLEMVEECERRMQPDCSNPLTLDECARIFETLQDKYYEEYRMSDRVDLAVAIVYPLMKEYFKEWDPLKDCTYGTEIISKWKSLLENDQLLSHGGQDLSADAFHRLIWEVWMPFVRNIVTQWQPRNCDPMVDFLDSWVHIIPVWILDNILDQLIFPKLQKEVENWNPLTDTVPIHSWIHPWLPLMQARLEPLYSPIRSKLSSALQKWHPSDSSAKLILQPWKDVFTPGSWEAFMVKNIVPKLGMCLGELVINPHQQHMDAFYWVIDWEGMISVSSLVGLLEKHFFPKWLQVLCSWLSNSPNYEEITKWYLGWKSMFSDQVLAHPSVKDKFNEALDIMNRAVSSNVGAYMQPGARENIAYLTHTERRKDFQYEAMQERREAENMAQRGIGVAASSVPMNFKDLIETKAEEHNIVFMPVIGKRHEGKQLYTFGRIVIYIDRGVVFVQGEKTWVPTSLQSLIDMAK.

Composition is skewed to basic and acidic residues over residues 1 to 13 (MSLSHLYRDGEGR) and 53 to 64 (VWAERDSDDERP). 3 disordered regions span residues 1 to 21 (MSLSHLYRDGEGRIDDDDDER), 53 to 72 (VWAERDSDDERPSFGGKRAR), and 85 to 133 (LKKG…KGFA). The required for interaction with DHX15 stretch occupies residues 1 to 50 (MSLSHLYRDGEGRIDDDDDERENFEITDWDLQNEFNPNRQRHWQTKEEAT). Phosphoserine occurs at positions 2, 59, and 98. The segment covering 91–102 (EEAELEDSDDEE) has biased composition (acidic residues). The segment covering 103-116 (KPVKQDDFPKDFGP) has biased composition (basic and acidic residues). Position 144 is a phosphoserine (serine 144). The G-patch domain maps to 149–195 (TKGIGQKLLQKMGYVPGRGLGKNAQGIINPIEAKQRKGKGAVGAYGS). The segment at 179–236 (IEAKQRKGKGAVGAYGSERTTQSMQDFPVVDSEEEAEEEFQKELSQWRKDPSGSKKKP) is disordered. Position 210 is a phosphoserine (serine 210). Basic and acidic residues predominate over residues 217–231 (EFQKELSQWRKDPSG). The Nuclear localization signal signature appears at 700-705 (VKDKFN). The required for nuclear speckle localization stretch occupies residues 710–734 (IMNRAVSSNVGAYMQPGARENIAYL).

It belongs to the TFP11/STIP family. As to quaternary structure, identified in the spliceosome C complex. Found in the Intron Large (IL) complex, a post-mRNA release spliceosomal complex containing the excised intron, U2, U5 and U6 snRNPs, and splicing factors. Interacts with TUFT1. Interacts with DHX15; indicative for a recruitment of DHX15 to the IL complex. Interacts with GCFC2.

The protein resides in the cytoplasm. It is found in the nucleus. Its function is as follows. Involved in pre-mRNA splicing, specifically in spliceosome disassembly during late-stage splicing events. Intron turnover seems to proceed through reactions in two lariat-intron associated complexes termed Intron Large (IL) and Intron Small (IS). In cooperation with DHX15 seems to mediate the transition of the U2, U5 and U6 snRNP-containing IL complex to the snRNP-free IS complex leading to efficient debranching and turnover of excised introns. May play a role in the differentiation of ameloblasts and odontoblasts or in the forming of the enamel extracellular matrix. The polypeptide is Tuftelin-interacting protein 11 (TFIP11) (Homo sapiens (Human)).